Reading from the N-terminus, the 338-residue chain is Protein mono-ADP-ribosyltransferase PARP11 (338 aa).

E13 is subject to ADP-ribosyl glutamic acid. K18 is subject to N6-(ADP-ribosyl)lysine. Positions 22–106 (NEVDDMDTSD…TTGKQRLIKR (85 aa)) constitute a WWE domain. C56 and C72 each carry ADP-ribosylcysteine. The residue at position 87 (D87) is an ADP-ribosyl aspartic acid. The PARP catalytic domain occupies 123–338 (IPMPPHWENV…IYPEYLIDFH (216 aa)).

The protein belongs to the ARTD/PARP family. Interacts with PARP12; this interaction plays a role in zika virus suppression. In terms of processing, auto-mono-ADP-ribosylated.

It is found in the nucleus. The protein resides in the nuclear pore complex. The enzyme catalyses L-aspartyl-[protein] + NAD(+) = 4-O-(ADP-D-ribosyl)-L-aspartyl-[protein] + nicotinamide. The catalysed reaction is L-cysteinyl-[protein] + NAD(+) = S-(ADP-D-ribosyl)-L-cysteinyl-[protein] + nicotinamide + H(+). It carries out the reaction L-glutamyl-[protein] + NAD(+) = 5-O-(ADP-D-ribosyl)-L-glutamyl-[protein] + nicotinamide. It catalyses the reaction L-lysyl-[protein] + NAD(+) = N(6)-(ADP-D-ribosyl)-L-lysyl-[protein] + nicotinamide + H(+). Functionally, mono-ADP-ribosyltransferase that mediates mono-ADP-ribosylation of target proteins. Plays a role in nuclear envelope stability and nuclear remodeling during spermiogenesis. Inhibits the type I interferon activated signaling pathway. Mechanistically, mono-ADP-ribosylates beta-TrCP/BTRC to promote IFNAR1 ubiquitination and protect BTRC from ubiquitin-proteasome degradation. Additionally, acts as an antiviral factor by cooperating with PARP12 to suppress Zika virus replication, independent of IFNAR1 regulation or intrinsic PARP enzymatic activity. Instead, facilitates the degradation of viral NS1 and NS3 proteins, potentially disrupting viral replication. In Homo sapiens (Human), this protein is Protein mono-ADP-ribosyltransferase PARP11.